The sequence spans 872 residues: DNA mismatch repair protein MutS (872 aa).

623 to 630 (GPNMAGKS) lines the ATP pocket.

The protein belongs to the DNA mismatch repair MutS family.

Functionally, this protein is involved in the repair of mismatches in DNA. It is possible that it carries out the mismatch recognition step. This protein has a weak ATPase activity. This Trichlorobacter lovleyi (strain ATCC BAA-1151 / DSM 17278 / SZ) (Geobacter lovleyi) protein is DNA mismatch repair protein MutS.